We begin with the raw amino-acid sequence, 382 residues long: Mannitol-1-phosphate 5-dehydrogenase (382 aa).

3–14 (ALHFGAGNIGRG) contributes to the NAD(+) binding site. Lysine 269 is subject to N6-acetyllysine.

This sequence belongs to the mannitol dehydrogenase family.

It carries out the reaction D-mannitol 1-phosphate + NAD(+) = beta-D-fructose 6-phosphate + NADH + H(+). The chain is Mannitol-1-phosphate 5-dehydrogenase from Escherichia coli O17:K52:H18 (strain UMN026 / ExPEC).